A 191-amino-acid polypeptide reads, in one-letter code: GDP-mannose pyrophosphatase (191 aa).

GDP-alpha-D-mannose-binding positions include Tyr-17, 38 to 40, Arg-67, and 85 to 87; these read KRE and AGL. Positions 43 to 180 constitute a Nudix hydrolase domain; sequence DRGNGATILL…EIRDGKTVLL (138 aa). Positions 85, 100, and 104 each coordinate Mg(2+). The Nudix box signature appears at 86–106; it reads GLLDNDEPEVCIRKEAIEETG. GDP-alpha-D-mannose is bound by residues Glu-104, Glu-127, 150-151, and Lys-176; that span reads DE. Glu-151 contacts Mg(2+).

This sequence belongs to the Nudix hydrolase family. NudK subfamily. In terms of assembly, homodimer. Requires Mg(2+) as cofactor.

The enzyme catalyses GDP-alpha-D-mannose + H2O = alpha-D-mannose 1-phosphate + GMP + 2 H(+). In terms of biological role, nucleoside diphosphate sugar hydrolase that hydrolyzes GDP-mannose as its preferred substrate, yielding GMP and mannose-1-phosphate. The chain is GDP-mannose pyrophosphatase (nudK) from Shigella dysenteriae serotype 1 (strain Sd197).